The chain runs to 1127 residues: Elongation factor-like GTPase 1 (1127 aa).

The region spanning 17–272 is the tr-type G domain; the sequence is ANIRNICVLA…LLKTLWGDYY (256 aa). Residues 26 to 33, 92 to 96, and 146 to 149 contribute to the GTP site; these read AHVDHGKT, DSPGH, and NKID. A disordered region spans residues 429–496; sequence KPRPLTQEEM…VASVSRQPVS (68 aa). Composition is skewed to basic and acidic residues over residues 438–452 and 474–484; these read MAQR…HAEK and SPHEDEPRGDE. Lys528 is modified (N6-acetyllysine).

This sequence belongs to the TRAFAC class translation factor GTPase superfamily. Classic translation factor GTPase family. Associates with the 60S ribosomal subunit. Found in a complex consisting of the 60S ribosomal subunit, SBDS and EFL1.

The catalysed reaction is GTP + H2O = GDP + phosphate + H(+). Its activity is regulated as follows. GTPase activity is stimulated in the presence of 60S ribosome subunits. Functionally, GTPase involved in the biogenesis of the 60S ribosomal subunit and translational activation of ribosomes. Together with SBDS, triggers the GTP-dependent release of EIF6 from 60S pre-ribosomes in the cytoplasm, thereby activating ribosomes for translation competence by allowing 80S ribosome assembly and facilitating EIF6 recycling to the nucleus, where it is required for 60S rRNA processing and nuclear export. This Mus musculus (Mouse) protein is Elongation factor-like GTPase 1 (Efl1).